An 89-amino-acid chain; its full sequence is Probable Fe(2+)-trafficking protein (89 aa).

It belongs to the Fe(2+)-trafficking protein family.

Could be a mediator in iron transactions between iron acquisition and iron-requiring processes, such as synthesis and/or repair of Fe-S clusters in biosynthetic enzymes. This Stenotrophomonas maltophilia (strain R551-3) protein is Probable Fe(2+)-trafficking protein.